Here is a 378-residue protein sequence, read N- to C-terminus: Tafazzin (378 aa).

At 1–137 (MFMVVCSNLR…RLRNPSKFWY (137 aa)) the chain is on the mitochondrial intermembrane side. The interval 46 to 112 (APEARPVPDE…DQDADPSLDV (67 aa)) is disordered. The segment covering 51–67 (PVPDERYPGSQQDRKDI) has biased composition (basic and acidic residues). An intramembrane segment occupies 138-158 (VVSQFVVSAVGIFSKVVLMFL). Over 159-378 (NKPRVYNRER…ETEKLHRERN (220 aa)) the chain is Mitochondrial intermembrane. The HXXXXD motif motif lies at 188–193 (HYSCFD).

The protein belongs to the taffazin family. As to quaternary structure, associates with multiple protein complexes. Association with large protein complexes occurs only in the presence of cardiolipin.

The protein localises to the mitochondrion outer membrane. Its subcellular location is the mitochondrion inner membrane. The protein resides in the mitochondrion. It is found in the mitochondrion membrane. It localises to the golgi apparatus membrane. The protein localises to the endoplasmic reticulum membrane. The enzyme catalyses 1'-[1,2-diacyl-sn-glycero-3-phospho],3'-[1-acyl-sn-glycero-3-phospho]-glycerol + a 1,2-diacyl-sn-glycero-3-phosphocholine = a cardiolipin + a 1-acyl-sn-glycero-3-phosphocholine. It carries out the reaction 1'-[1,2-di-(9Z,12Z-octadecadienoyl)-sn-glycero-3-phospho]-3'-[1-(9Z,12Z-octadecadienoyl)-sn-glycero-3-phospho]-glycerol + 1-hexadecanoyl-2-(9Z,12Z-octadecadienoyl)-sn-glycero-3-phosphocholine = 1',3'-bis-[1,2-di-(9Z,12Z-octadecadienoyl)-sn-glycero-3-phospho]-glycerol + 1-hexadecanoyl-sn-glycero-3-phosphocholine. The catalysed reaction is 1'-[1,2-di-(9Z,12Z-octadecadienoyl)-sn-glycero-3-phospho]-3'-[2-(9Z,12Z-octadecadienoyl)-sn-glycero-3-phospho]-glycerol + 1-hexadecanoyl-2-(9Z,12Z-octadecadienoyl)-sn-glycero-3-phosphocholine = 1',3'-bis-[1,2-di-(9Z,12Z-octadecadienoyl)-sn-glycero-3-phospho]-glycerol + 1-hexadecanoyl-sn-glycero-3-phosphocholine. It catalyses the reaction 1,2-di-(9Z,12Z-octadecadienoyl)-sn-glycero-3-phosphocholine + 1'-[1,2-di-(9Z,12Z-octadecadienoyl)-sn-glycero-3-phospho]-3'-[1-(9Z,12Z-octadecadienoyl)-sn-glycero-3-phospho]-glycerol = 1-(9Z,12Z)-octadecadienoyl-sn-glycero-3-phosphocholine + 1',3'-bis-[1,2-di-(9Z,12Z-octadecadienoyl)-sn-glycero-3-phospho]-glycerol. The enzyme catalyses 1-tetradecanoyl-sn-glycero-3-phosphocholine + 1',3'-bis-[1,2-di-(9Z,12Z-octadecadienoyl)-sn-glycero-3-phospho]-glycerol = 1-tetradecanoyl-2-(9Z,12Z-octadecadienoyl)-sn-glycero-3-phosphocholine + 1'-[1,2-di-(9Z,12Z-octadecadienoyl)-sn-glycero-3-phospho]-3'-[1-(9Z,12Z-octadecadienoyl)-sn-glycero-3-phospho]-glycerol. It carries out the reaction 1',3'-bis[1,2-di-(9Z-octadecenoyl)-sn-glycero-3-phospho]-glycerol + 1-nonadecanoyl-sn-glycero-3-phosphocholine = 1-nonadecanoyl-2-(9Z-octadecenoyl)-sn-glycero-3-phosphocholine + 1'-[1,2-di-(9Z-octadecenoyl)-sn-glycero-3-phospho]-3'-[1-(9Z-octadecenoyl)-sn-glycero-3-phospho]-glycerol. The catalysed reaction is a 1,2-diacyl-sn-glycero-3-phospho-(1'-sn-glycerol) + a 1-acyl-sn-glycero-3-phosphocholine = 1-acyl-sn-glycero-3-phospho-(1'-sn-glycerol) + a 1,2-diacyl-sn-glycero-3-phosphocholine. It catalyses the reaction 1-hexadecanoyl-2-(9Z,12Z-octadecadienoyl)-sn-glycero-3-phospho-(1'-sn-glycerol) + 1-hexadecanoyl-sn-glycero-3-phosphocholine = 1-hexadecanoyl-sn-glycero-3-phospho-(1'-sn-glycerol) + 1-hexadecanoyl-2-(9Z,12Z-octadecadienoyl)-sn-glycero-3-phosphocholine. The enzyme catalyses 1,2-di-(9Z-octadecenoyl)-sn-glycero-3-phospho-(1'-sn-glycerol) + 1-nonadecanoyl-sn-glycero-3-phosphocholine = 1-nonadecanoyl-2-(9Z-octadecenoyl)-sn-glycero-3-phosphocholine + 1-(9Z-octadecenoyl)-sn-glycero-3-phospho-(1'-sn-glycerol). It carries out the reaction a 1,2-diacyl-sn-glycero-3-phosphate + a 1-acyl-sn-glycero-3-phosphocholine = a 1-acyl-sn-glycero-3-phosphate + a 1,2-diacyl-sn-glycero-3-phosphocholine. The catalysed reaction is 1-hexadecanoyl-2-(9Z,12Z-octadecadienoyl)-sn-glycero-3-phosphate + 1-hexadecanoyl-sn-glycero-3-phosphocholine = 1-hexadecanoyl-2-(9Z,12Z-octadecadienoyl)-sn-glycero-3-phosphocholine + 1-hexadecanoyl-sn-glycero-3-phosphate. It catalyses the reaction 1-hexadecanoyl-2-(9Z,12Z-octadecadienoyl)-sn-glycero-3-phosphocholine + 1-(9Z-octadecenoyl)-sn-glycero-3-phosphate = 1-(9Z)-octadecenoyl-2-(9Z,12Z)-octadecadienoyl-sn-glycero-3-phosphate + 1-hexadecanoyl-sn-glycero-3-phosphocholine. The enzyme catalyses a 1-acyl-sn-glycero-3-phosphocholine + a 1,2-diacyl-sn-glycero-3-phosphoethanolamine = a 1-acyl-sn-glycero-3-phosphoethanolamine + a 1,2-diacyl-sn-glycero-3-phosphocholine. It carries out the reaction 1-hexadecanoyl-2-(9Z,12Z-octadecadienoyl)-sn-glycero-3-phosphoethanolamine + 1-hexadecanoyl-sn-glycero-3-phosphocholine = 1-hexadecanoyl-2-(9Z,12Z-octadecadienoyl)-sn-glycero-3-phosphocholine + 1-hexadecanoyl-sn-glycero-3-phosphoethanolamine. The catalysed reaction is 1,2-di-(9Z,12Z-octadecadienoyl)-sn-glycero-3-phosphoethanolamine + 1-tetradecanoyl-sn-glycero-3-phosphocholine = 1-(9Z,12Z-octadecadienoyl)-sn-glycero-3-phosphoethanolamine + 1-tetradecanoyl-2-(9Z,12Z-octadecadienoyl)-sn-glycero-3-phosphocholine. It catalyses the reaction 1'-[1,2-diacyl-sn-glycero-3-phospho],3'-[1-acyl-sn-glycero-3-phospho]-glycerol + a 1,2-diacyl-sn-glycero-3-phosphoethanolamine = a cardiolipin + a 1-acyl-sn-glycero-3-phosphoethanolamine. The enzyme catalyses 1-hexadecanoyl-2-(9Z,12Z-octadecadienoyl)-sn-glycero-3-phosphoethanolamine + 1'-[1,2-di-(9Z,12Z-octadecadienoyl)-sn-glycero-3-phospho]-3'-[1-(9Z,12Z-octadecadienoyl)-sn-glycero-3-phospho]-glycerol = 1',3'-bis-[1,2-di-(9Z,12Z-octadecadienoyl)-sn-glycero-3-phospho]-glycerol + 1-hexadecanoyl-sn-glycero-3-phosphoethanolamine. It carries out the reaction 1'-[1-(9Z,12Z-octadecadienoyl)-2-(9Z-octadecenoyl)-sn-glycero-3-phospho]-3'-[1-(9Z,12Z-octadecadienoyl)-sn-glycero-3-phospho]-glycerol + 1',3'-bis-[1,2-di-(9Z,12Z-octadecadienoyl)-sn-glycero-3-phospho]-glycerol = 1'-[1,2-di-(9Z,12Z-octadecadienoyl)-sn-glycero-3-phospho]-3'-[1-(9Z,12Z-octadecadienoyl)-2-(9Z-octadecenoyl)-sn-glycero-3-phospho]-glycerol + 1'-[1,2-di-(9Z,12Z-octadecadienoyl)-sn-glycero-3-phospho]-3'-[1-(9Z,12Z-octadecadienoyl)-sn-glycero-3-phospho]-glycerol. The catalysed reaction is 1,2-di-(9Z-hexadecenoyl)-sn-glycero-3-phosphocholine + 1-hexadecanoyl-sn-glycero-3-phosphocholine = 1-hexadecanoyl-2-(9Z-hexadecenoyl)-sn-glycero-3-phosphocholine + 1-(9Z-hexadecenoyl)-sn-glycero-3-phosphocholine. It catalyses the reaction 1,2-dioctadecanoyl-sn-glycero-3-phosphocholine + 1-hexadecanoyl-sn-glycero-3-phosphocholine = 1-hexadecanoyl-2-octadecanoyl-sn-glycero-3-phosphocholine + 1-octadecanoyl-sn-glycero-3-phosphocholine. The enzyme catalyses 1,2-di-(9Z-octadecenoyl)-sn-glycero-3-phosphocholine + 1-hexadecanoyl-sn-glycero-3-phosphocholine = 1-hexadecanoyl-2-(9Z-octadecenoyl)-sn-glycero-3-phosphocholine + 1-(9Z-octadecenoyl)-sn-glycero-3-phosphocholine. It carries out the reaction 1,2-di-(9Z,12Z-octadecadienoyl)-sn-glycero-3-phosphocholine + 1-(9Z-octadecenoyl)-sn-glycero-3-phosphocholine = 1-(9Z)-octadecenoyl-2-(9Z,12Z)-octadecadienoyl-sn-glycero-3-phosphocholine + 1-(9Z,12Z)-octadecadienoyl-sn-glycero-3-phosphocholine. The catalysed reaction is 1,2-di-(9Z,12Z,15Z-octadecatrienoyl)-sn-glycero-3-phosphocholine + 1-tetradecanoyl-sn-glycero-3-phosphocholine = 1-tetradecanoyl-2-(9Z,12Z,15Z-octadecatrienoyl)-sn-glycero-3-phosphocholine + 1-(9Z,12Z,15Z-octadecatrienoyl)-sn-glycero-3-phosphocholine. It catalyses the reaction 1-nonadecanoyl-sn-glycero-3-phosphocholine + 1-octadecanoyl-2-(9Z-octadecenoyl)-sn-glycero-3-phosphocholine = 1-nonadecanoyl-2-(9Z-octadecenoyl)-sn-glycero-3-phosphocholine + 1-octadecanoyl-sn-glycero-3-phosphocholine. The enzyme catalyses 1-(9Z)-octadecenoyl-2-octadecanoyl-sn-glycero-3-phosphocholine + 1-nonadecanoyl-sn-glycero-3-phosphocholine = 2-octadecanoyl-sn-glycero-3-phosphocholine + 1-nonadecanoyl-2-(9Z-octadecenoyl)-sn-glycero-3-phosphocholine. The protein operates within phospholipid metabolism. In terms of biological role, acyltransferase required to remodel newly synthesized phospholipid cardiolipin (1',3'-bis-[1,2-diacyl-sn-glycero-3-phospho]-glycerol or CL), a key component of the mitochondrial inner membrane, with tissue specific acyl chains necessary for adequate mitochondrial function. Its role in cellular physiology is to improve mitochondrial performance. CL is critical for the coassembly of lipids and proteins in mitochondrial membranes. For instance, remodeling of the acyl groups of CL in the mitochondrial inner membrane affects the assembly and stability of respiratory chain complex IV and its supercomplex forms. Catalyzes the transacylation between phospholipids and lysophospholipids, with the highest rate being between phosphatidylcholine (1,2-diacyl-sn-glycero-3-phosphocholine or PC) and CL. Catalyzes both 1-acyl-sn-glycero-3-phosphocholine (lysophosphatidylcholine or LPC) reacylation and PC-CL transacylation, that means, it exchanges acyl groups between CL and PC by a combination of forward and reverse transacylations. Also catalyzes transacylations between other phospholipids such as phosphatidylethanolamine (1,2-diacyl-sn-glycero-3-phosphoethanolamine or PE) and CL, between PC and PE, and between PC and phosphatidate (1,2-diacyl-sn-glycero-3-phosphate or PA), although at lower rate. Not regiospecific, it transfers acyl groups into any of the sn-1 and sn-2 positions of the monolysocardiolipin (MLCL), which is an important prerequisite for uniformity and symmetry in CL acyl distribution. Cannot transacylate dilysocardiolipin (DLCL), thus, the role of MLCL is limited to that of an acyl acceptor. CoA-independent, it can reshuffle molecular species within a single phospholipid class. Redistributes fatty acids between MLCL, CL, and other lipids, which prolongs the half-life of CL. Its action is completely reversible, which allows for cyclic changes, such as fission and fusion or bending and flattening of the membrane. Hence, by contributing to the flexibility of the lipid composition, it plays an important role in the dynamics of mitochondria membranes. Essential for the final stage of spermatogenesis, spermatid individualization. Required for the initiation of mitophagy. In Drosophila melanogaster (Fruit fly), this protein is Tafazzin.